A 624-amino-acid polypeptide reads, in one-letter code: Fibronectin type III domain-containing protein 2 (624 aa).

Residues 1–19 (MREQFSVLVISLLFSSSYG) form the signal peptide. 5 consecutive Fibronectin type-III domains span residues 131 to 236 (PPQN…TPDI), 240 to 330 (EPTN…TDVF), 334 to 430 (MPRF…TVPT), 431 to 524 (VPRE…PKRD), and 527 to 624 (VPPN…WPGR).

As to expression, prismatic layer of shell (at protein level).

The protein localises to the secreted. This chain is Fibronectin type III domain-containing protein 2, found in Margaritifera margaritifera (Freshwater pearl mussel).